Here is a 229-residue protein sequence, read N- to C-terminus: Galactonate operon transcriptional repressor (229 aa).

One can recognise an HTH gntR-type domain in the interval 1-71 (MTLNKTDRIV…RYRGAFVAPR (71 aa)). The H-T-H motif DNA-binding region spans 31–50 (EAELCEEFATSRNIIREVFR). Residues D146, H150, and H195 each coordinate Zn(2+).

As to quaternary structure, homodimer.

D-galactonate binds DgoR and induces a conformational change in the protein, which decreases its affinity for DNA and consequently derepresses transcription of the dgoRKADT operon. In terms of biological role, involved in the regulation of D-galactonate metabolism. Represses the expression of the dgoRKADT operon by binding to two closely spaced inverted repeats in the cis-acting element, which overlap with the D-galactonate responsive dgo promoter. Employs a derepression mechanism using D-galactonate as a specific effector molecule. The protein is Galactonate operon transcriptional repressor of Escherichia coli (strain K12).